The chain runs to 435 residues: Cytokine-dependent hematopoietic cell linker (435 aa).

A phosphotyrosine; by LYN mark is found at Tyr69 and Tyr96. Residues 155 to 303 are disordered; the sequence is KINKTPLPPP…PDPTKPDEKD (149 aa). The tract at residues 160–165 is mediates interaction with PLCG1; essential for BCR signaling; involved in restoration of BCR-induced calcium response and ERK2 and JNK2 activation in BLNK-deficient cells expressing LAT; sequence PLPPPR. The interval 178 to 182 is mediates interaction with LAT, GRB2, and FGR; involved in translocation to the glycolipid-enriched microdomain and restoration of BCR-induced calcium response in BLNK-deficient DT40 cells expressing LAT; sequence PPAPP. Over residues 226–249 the composition is skewed to polar residues; it reads PESSCPSSNQNTQKSPPAIASSSY. Basic and acidic residues predominate over residues 290 to 303; the sequence is NSEKPDPTKPDEKD. An SH2 domain is found at 309-418; it reads WYIGEYSRQA…RKQCYLTQPL (110 aa).

As to quaternary structure, when phosphorylated, interacts with PLCG1, PLCG2, GRB2, VAV and LAT. Associated with a tyrosine-phosphorylated polypeptide (p92) in response to immunoreceptor stimulation. Interacts with LBR and AGO2. Interacts with FGR. Part of a complex consisting of CLNK, SKAP1 and FYB1. Interacts (via SH2 domain) with FYB1; this interaction allows SKAP1 and FYB1 to promote tyrosine phosphorylation of CLNK by LYN. Interacts (via SH2 domain) with MAP4K1. Post-translationally, tyrosine-phosphorylated upon BCR cross-linking. Tyrosine phosphorylation at both Tyr-69 and Tyr-96 are required for BCR-induced calcium response and are essential to restore PLCG2-mediated signaling in BLNK-deficient DT40 cells, but this phosphorylation is dispensable in cells expressing LAT. Interacts with the SH2 domain of PLCG1 via phosphorylated Tyr-96. Tyrosine phosphorylation is increased when complexed with SKAP1 and FYB1. Expressed in T-cells, mast cells, natural killer and natural killer T cells (at protein level). Expressed in cytokine-stimulated hemopoietic cells.

The protein resides in the cytoplasm. In terms of biological role, an adapter protein which plays a role in the regulation of immunoreceptor signaling, including PLC-gamma-mediated B-cell antigen receptor (BCR) signaling and FC-epsilon R1-mediated mast cell degranulation. Together with FGR, it acts as a negative regulator of natural killer cell-activating receptors and inhibits interferon-gamma production. Acts as a positive regulator of both T-cell receptor and natural killer T (NKT) cell receptor signaling in CD4-positive NKT cells. Together with MAP4K1, it enhances CD3-triggered activation of T-cells and subsequent IL2 production. May be involved in tumor necrosis factor induced cell death by promoting reactive oxidative species generation, and MLKL oligomerization, ultimately leading to necrosis. Involved in phosphorylation of LAT. May be involved in high affinity immunoglobulin epsilon receptor signaling in mast cells. This is Cytokine-dependent hematopoietic cell linker (Clnk) from Mus musculus (Mouse).